A 217-amino-acid polypeptide reads, in one-letter code: MLSVLRKSFPNGVTHAHRVIRCKSNQDKCAKNALIILAPGAEEMEFTISADVLRRGKILVTVAGLHDCEPVKCSRSVVIVPDTSLEEAVTRGDYDVVVLPGGLAGNKALMNSSAVGDVLRCQESKGGLIAAICAAPTALAKHGIGKGKSITSHPDMKPQLKELYCYIDDKTVVQDGNIITSRGPGTTFDFALKITEQLVGAEVAKEVAKAMLWTYKP.

Catalysis depends on C133, which acts as the Nucleophile. C133 is subject to Cysteine sulfinic acid (-SO2H); alternate.

In terms of tissue distribution, expressed in testis (at protein level).

The protein resides in the cytoplasm. The protein localises to the nucleus. Its subcellular location is the mitochondrion. In terms of biological role, plays an important role in cell protection against oxidative stress and cell death acting as oxidative stress sensor. Does not play a role in methylglyoxal detoxification. The polypeptide is Protein DJ-1alpha (Drosophila melanogaster (Fruit fly)).